The chain runs to 436 residues: UPF0597 protein YhaM (436 aa).

It belongs to the UPF0597 family.

In Escherichia coli (strain K12 / MC4100 / BW2952), this protein is UPF0597 protein YhaM.